The chain runs to 295 residues: GTPase Era (295 aa).

The Era-type G domain maps to 7–176 (KTVSVCIIGR…ITSKAKIAPW (170 aa)). The G1 stretch occupies residues 15–22 (GRPNSGKS). GTP is bound at residue 15–22 (GRPNSGKS). Residues 41–45 (QTTRS) are G2. The interval 62–65 (DTPG) is G3. GTP is bound by residues 62–66 (DTPGI) and 124–127 (NKID). The tract at residues 124-127 (NKID) is G4. The interval 152 to 154 (ISA) is G5. The region spanning 204-281 (LQQELPYKLT…HLFLFVKVQE (78 aa)) is the KH type-2 domain.

Belongs to the TRAFAC class TrmE-Era-EngA-EngB-Septin-like GTPase superfamily. Era GTPase family. In terms of assembly, monomer.

The protein resides in the cytoplasm. It localises to the cell inner membrane. Its function is as follows. An essential GTPase that binds both GDP and GTP, with rapid nucleotide exchange. Plays a role in 16S rRNA processing and 30S ribosomal subunit biogenesis and possibly also in cell cycle regulation and energy metabolism. This chain is GTPase Era, found in Rickettsia bellii (strain RML369-C).